Consider the following 326-residue polypeptide: Ribosomal RNA small subunit methyltransferase H (326 aa).

Residues 35-37, D53, F80, D101, and Q108 contribute to the S-adenosyl-L-methionine site; that span reads GGY. Residues 260 to 306 form a disordered region; the sequence is EGVSRHLPQASNAGAGNPPPSFQAVSRRAVKPLDAETRVNPRSRSAR.

The protein belongs to the methyltransferase superfamily. RsmH family.

It is found in the cytoplasm. It catalyses the reaction cytidine(1402) in 16S rRNA + S-adenosyl-L-methionine = N(4)-methylcytidine(1402) in 16S rRNA + S-adenosyl-L-homocysteine + H(+). Specifically methylates the N4 position of cytidine in position 1402 (C1402) of 16S rRNA. In Rhodospirillum rubrum (strain ATCC 11170 / ATH 1.1.1 / DSM 467 / LMG 4362 / NCIMB 8255 / S1), this protein is Ribosomal RNA small subunit methyltransferase H.